A 203-amino-acid chain; its full sequence is Protein ILM1 (203 aa).

The Cytoplasmic portion of the chain corresponds to 1 to 3 (MAQ). A helical transmembrane segment spans residues 4-24 (ALNSTNIAFFRVAFLFTIAFF). Over 25–58 (CLKNVNSILQNTYFIVLTQAMNLPQLTLSRYSGQ) the chain is Lumenal. A helical membrane pass occupies residues 59–79 (LGLFALLFTLNGVHDLIPLLE). At 80-92 (NNVKYFQSVVPVR) the chain is on the cytoplasmic side. Residues 93 to 113 (LLIFFILTSISYLWESNFYVH) traverse the membrane as a helical segment. A topological domain (lumenal) is located at residue Asn114. A helical membrane pass occupies residues 115-135 (NSVFIYCFAEVWINFLLYNAI). The Cytoplasmic portion of the chain corresponds to 136–203 (REEKNEEFKR…KGNDDSDAKK (68 aa)). Residues 175-187 (INDEENDDEDGKD) are compositionally biased toward acidic residues. The interval 175–203 (INDEENDDEDGKDNDDNNEKGNDDSDAKK) is disordered. A compositionally biased stretch (basic and acidic residues) spans 188-203 (NDDNNEKGNDDSDAKK).

Belongs to the ILM1 family.

It localises to the endoplasmic reticulum membrane. The polypeptide is Protein ILM1 (ILM1) (Saccharomyces cerevisiae (strain ATCC 204508 / S288c) (Baker's yeast)).